The chain runs to 204 residues: Thiamine-phosphate synthase (204 aa).

Residues 37–41 (QVREK) and asparagine 69 each bind 4-amino-2-methyl-5-(diphosphooxymethyl)pyrimidine. Mg(2+) is bound by residues aspartate 70 and aspartate 89. Residue serine 108 participates in 4-amino-2-methyl-5-(diphosphooxymethyl)pyrimidine binding. 134 to 136 (TGT) lines the 2-[(2R,5Z)-2-carboxy-4-methylthiazol-5(2H)-ylidene]ethyl phosphate pocket. Position 137 (lysine 137) interacts with 4-amino-2-methyl-5-(diphosphooxymethyl)pyrimidine. 2-[(2R,5Z)-2-carboxy-4-methylthiazol-5(2H)-ylidene]ethyl phosphate contacts are provided by residues glycine 165 and 185–186 (IS).

This sequence belongs to the thiamine-phosphate synthase family. Mg(2+) serves as cofactor.

The catalysed reaction is 2-[(2R,5Z)-2-carboxy-4-methylthiazol-5(2H)-ylidene]ethyl phosphate + 4-amino-2-methyl-5-(diphosphooxymethyl)pyrimidine + 2 H(+) = thiamine phosphate + CO2 + diphosphate. The enzyme catalyses 2-(2-carboxy-4-methylthiazol-5-yl)ethyl phosphate + 4-amino-2-methyl-5-(diphosphooxymethyl)pyrimidine + 2 H(+) = thiamine phosphate + CO2 + diphosphate. It catalyses the reaction 4-methyl-5-(2-phosphooxyethyl)-thiazole + 4-amino-2-methyl-5-(diphosphooxymethyl)pyrimidine + H(+) = thiamine phosphate + diphosphate. It functions in the pathway cofactor biosynthesis; thiamine diphosphate biosynthesis; thiamine phosphate from 4-amino-2-methyl-5-diphosphomethylpyrimidine and 4-methyl-5-(2-phosphoethyl)-thiazole: step 1/1. Its function is as follows. Condenses 4-methyl-5-(beta-hydroxyethyl)thiazole monophosphate (THZ-P) and 2-methyl-4-amino-5-hydroxymethyl pyrimidine pyrophosphate (HMP-PP) to form thiamine monophosphate (TMP). In Clostridium novyi (strain NT), this protein is Thiamine-phosphate synthase.